A 469-amino-acid chain; its full sequence is 3-isopropylmalate dehydratase large subunit (469 aa).

Cys-349, Cys-410, and Cys-413 together coordinate [4Fe-4S] cluster.

Belongs to the aconitase/IPM isomerase family. LeuC type 1 subfamily. In terms of assembly, heterodimer of LeuC and LeuD. The cofactor is [4Fe-4S] cluster.

It carries out the reaction (2R,3S)-3-isopropylmalate = (2S)-2-isopropylmalate. It participates in amino-acid biosynthesis; L-leucine biosynthesis; L-leucine from 3-methyl-2-oxobutanoate: step 2/4. Catalyzes the isomerization between 2-isopropylmalate and 3-isopropylmalate, via the formation of 2-isopropylmaleate. The polypeptide is 3-isopropylmalate dehydratase large subunit (Neisseria meningitidis serogroup A / serotype 4A (strain DSM 15465 / Z2491)).